Here is a 151-residue protein sequence, read N- to C-terminus: Non-specific lipid transfer protein GPI-anchored 30 (151 aa).

An N-terminal signal peptide occupies residues 1–22 (MMMGMKFFSFYVVLLLVAASSG). 4 cysteine pairs are disulfide-bonded: Cys32-Cys69, Cys39-Cys53, Cys54-Cys97, and Cys67-Cys106. Asn44 is a glycosylation site (N-linked (GlcNAc...) asparagine). Ser120 carries the GPI-anchor amidated serine lipid modification. Positions 121–151 (SSIGNTFSQSYWMTTLAIAATVLSYCHHIIS) are cleaved as a propeptide — removed in mature form.

It belongs to the plant LTP family. Expressed in vascular tissues of all organs. Expressed in seedlings, preferentially in hypocotyls and roots. Also observed in siliques.

The protein resides in the cell membrane. Functionally, lipid transfer protein that promotes the number of phloem (pro)cambial and pericycle cells. In Arabidopsis thaliana (Mouse-ear cress), this protein is Non-specific lipid transfer protein GPI-anchored 30.